We begin with the raw amino-acid sequence, 178 residues long: Large ribosomal subunit protein uL6 (178 aa).

It belongs to the universal ribosomal protein uL6 family. In terms of assembly, part of the 50S ribosomal subunit.

Functionally, this protein binds to the 23S rRNA, and is important in its secondary structure. It is located near the subunit interface in the base of the L7/L12 stalk, and near the tRNA binding site of the peptidyltransferase center. This chain is Large ribosomal subunit protein uL6, found in Enterococcus faecalis (strain ATCC 700802 / V583).